Consider the following 223-residue polypeptide: Serum amyloid P-component (223 aa).

A signal peptide spans 1–19; that stretch reads MDKMLFWVSVFTIFLDVFA. The region spanning 24–223 is the Pentraxin (PTX) domain; sequence DKKVFVFPRE…YVIIKPRVWD (200 aa). Residues Cys-55 and Cys-114 are joined by a disulfide bond. Residues Asp-77, Asn-78, Glu-155, Gln-156, Asp-157, and Gln-167 each coordinate Ca(2+). Asn-198 carries N-linked (GlcNAc...) asparagine glycosylation.

This sequence belongs to the pentraxin family. As to quaternary structure, homopentamer. Pentraxin (or pentaxin) have a discoid arrangement of 5 non-covalently bound subunits. The cofactor is Ca(2+).

The protein resides in the secreted. The chain is Serum amyloid P-component (PTX2) from Cavia porcellus (Guinea pig).